We begin with the raw amino-acid sequence, 428 residues long: MSSNNEILFARAQKSTPGGVNSPVRAFRSVGGTPRFITRAEGPYFWDADDRRYIDYIGSWGPAIVGHAHPDVVKAVQDAATRGLSFGAPTEGEIRMAELICQLVPSIEQVRLVSSGTEAAMSALRLARGATGRDTIIKFEGCYHGHADSLLVKAGSGLLTFGNPTSAGVPEDFAKHTLVLDYNNPQQLEDTFKEIGNQIACVIVEPVAGNMNLLPATPEFLQTMRRVCTQYGAVLIFDEVMSGFRVALGGAQSMYDIKPDLTVLGKVIGGGLPVAAFGGRTDLMQHLAPLGGVYQAGTLSGNPVTVAAGLATLKLIQVPGFYESLATQTGKLVAGLSAAARAANIAFSANSVGGMFGMYFAAEKPQSYTEMMKCDVAHFNTFFHAMLDAGVYLAPSAFEAGFVSAQHDDAIIEASIQAARQAFAQLGQ.

The residue at position 266 (Lys-266) is an N6-(pyridoxal phosphate)lysine.

The protein belongs to the class-III pyridoxal-phosphate-dependent aminotransferase family. HemL subfamily. In terms of assembly, homodimer. Pyridoxal 5'-phosphate serves as cofactor.

Its subcellular location is the cytoplasm. The catalysed reaction is (S)-4-amino-5-oxopentanoate = 5-aminolevulinate. The protein operates within porphyrin-containing compound metabolism; protoporphyrin-IX biosynthesis; 5-aminolevulinate from L-glutamyl-tRNA(Glu): step 2/2. The chain is Glutamate-1-semialdehyde 2,1-aminomutase from Herminiimonas arsenicoxydans.